The chain runs to 332 residues: MAVIYYDKDCDLSLIEKKIIGIVGYGAQGHAHAQNLRDSGLKVIVACVEGGRGWKKATADGFEVMCVAEMAKKADIIMMLAPDTSQAKIYKDSVEQGLTPGKMLMFAHGFNIHYGQIVPPSFVDVTMIAPKCPGYMLRQVFTEGAGAPSLIAVEQDASGKAKEIALAYAKGIGSNRAGVLETTFAEETETDLFGEQAVLCGGTTSLVKAGFETLVEAGYQPEVAYFECLHELKLIVDLMYQGGIAYMRDSISDTAKYGDFTRGPRVINEETYETMGEILGEIQDGSFAKEWILENQAGRPVYNSLRRMESEHLIEEVGAELRSMMSWLKKKK.

In terms of domain architecture, KARI N-terminal Rossmann spans 1 to 182 (MAVIYYDKDC…GSNRAGVLET (182 aa)). Residues 25 to 28 (YGAQ) and 83 to 86 (DTSQ) contribute to the NADP(+) site. Residue histidine 108 is part of the active site. Glycine 134 serves as a coordination point for NADP(+). The region spanning 183–328 (TFAEETETDL…AELRSMMSWL (146 aa)) is the KARI C-terminal knotted domain. Positions 191, 195, 227, and 231 each coordinate Mg(2+). A substrate-binding site is contributed by serine 252.

It belongs to the ketol-acid reductoisomerase family. The cofactor is Mg(2+).

The enzyme catalyses (2R)-2,3-dihydroxy-3-methylbutanoate + NADP(+) = (2S)-2-acetolactate + NADPH + H(+). The catalysed reaction is (2R,3R)-2,3-dihydroxy-3-methylpentanoate + NADP(+) = (S)-2-ethyl-2-hydroxy-3-oxobutanoate + NADPH + H(+). It functions in the pathway amino-acid biosynthesis; L-isoleucine biosynthesis; L-isoleucine from 2-oxobutanoate: step 2/4. Its pathway is amino-acid biosynthesis; L-valine biosynthesis; L-valine from pyruvate: step 2/4. Its function is as follows. Involved in the biosynthesis of branched-chain amino acids (BCAA). Catalyzes an alkyl-migration followed by a ketol-acid reduction of (S)-2-acetolactate (S2AL) to yield (R)-2,3-dihydroxy-isovalerate. In the isomerase reaction, S2AL is rearranged via a Mg-dependent methyl migration to produce 3-hydroxy-3-methyl-2-ketobutyrate (HMKB). In the reductase reaction, this 2-ketoacid undergoes a metal-dependent reduction by NADPH to yield (R)-2,3-dihydroxy-isovalerate. This Dehalococcoides mccartyi (strain ATCC BAA-2266 / KCTC 15142 / 195) (Dehalococcoides ethenogenes (strain 195)) protein is Ketol-acid reductoisomerase (NADP(+)).